Reading from the N-terminus, the 242-residue chain is Protein MHF1 homolog (242 aa).

The segment at 208 to 242 (LKAKEPQSERKRKKGSAKKEDKASSSNAVRITTDL) is disordered. Positions 231 to 242 (SSSNAVRITTDL) are enriched in polar residues.

It belongs to the TAF9 family. CENP-S/MHF1 subfamily.

The protein localises to the nucleus. Its function is as follows. Involved in the promotion of spontaneous somatic homologous recombination (HR) events, which is opposite to the function of FANCM in ordered HR. Only FANCM is essential for replicative repair in the absence of the endonuclease MUS81. Acts in the same pathway as FANCM to restrain class II meiotic crossing over (CO), and acts with FANCM during meiosis to repair interstrand cross-links (ICLs). This common pathway between MHF1 and FANCM is in parallel to the pathway that involves the RECQ4A helicase. In Arabidopsis thaliana (Mouse-ear cress), this protein is Protein MHF1 homolog.